Here is a 95-residue protein sequence, read N- to C-terminus: Integration host factor subunit beta (95 aa).

It belongs to the bacterial histone-like protein family. Heterodimer of an alpha and a beta chain.

Functionally, this protein is one of the two subunits of integration host factor, a specific DNA-binding protein that functions in genetic recombination as well as in transcriptional and translational control. This is Integration host factor subunit beta from Paracoccus denitrificans (strain Pd 1222).